A 235-amino-acid polypeptide reads, in one-letter code: 7-cyano-7-deazaguanine synthase (235 aa).

Position 8 to 18 (8 to 18 (FSGGQDSTTCL)) interacts with ATP. Residues C187, C196, C199, and C202 each contribute to the Zn(2+) site.

This sequence belongs to the QueC family. Zn(2+) is required as a cofactor.

The enzyme catalyses 7-carboxy-7-deazaguanine + NH4(+) + ATP = 7-cyano-7-deazaguanine + ADP + phosphate + H2O + H(+). It functions in the pathway purine metabolism; 7-cyano-7-deazaguanine biosynthesis. In terms of biological role, catalyzes the ATP-dependent conversion of 7-carboxy-7-deazaguanine (CDG) to 7-cyano-7-deazaguanine (preQ(0)). This Aeromonas hydrophila subsp. hydrophila (strain ATCC 7966 / DSM 30187 / BCRC 13018 / CCUG 14551 / JCM 1027 / KCTC 2358 / NCIMB 9240 / NCTC 8049) protein is 7-cyano-7-deazaguanine synthase.